A 616-amino-acid polypeptide reads, in one-letter code: MPKYRSHTTTHGRNMAGARALWRATGMTDDDFGKPIIAVVNSFTQFVPGHVHLRDLGKLVAEQIVASGGVAKEFNTIAVDDGIAMGHGGMLYSLPSRELIADSVEYMVNAHCADAMVCISNCDKITPGMLMASLRLNIPVIFVSGGPMEAGKTKLSDKIIKLDLIDAMIQGANPNVSDEESAQIERSACPTCGSCSGMFTANSMNCLNEALGLALPGNGSLLATHADRKQLFLDAGKHIVALTKRYYEQDDVSALPRNIANKAAFENAMILDIAMGGSTNTVLHLLAAAQEGEIDFSMTDIDRLSRKVPHLCKVAPSTQKYHMEDVHRAGGVIGILGELDRAGLLNRDVSNVLGLNLTQTLEAYDVMLTQDEGVKQMYAAGPAGIRTTKAFSQDCRYPSLDTDREEGCIRTREHAYSQDGGLAVLYGNIAADGCIVKTAGVDKDSLTFRGPAKVFESQDEAVEAILGGKVVAGDVVVIRYEGPKGGPGMQEMLYPTTYLKSMGLGKSCALLTDGRFSGGTSGLSIGHVSPEAASGGLIGLVQDGDFINIDIPNRGIVLDVSEAELAARRETEEAHGDAAWSPKGRERQVSYALRAYAMLATSADKGAVRDKSKLGG.

Asp81 is a Mg(2+) binding site. Residue Cys122 participates in [2Fe-2S] cluster binding. 2 residues coordinate Mg(2+): Asp123 and Lys124. Lys124 bears the N6-carboxylysine mark. Position 195 (Cys195) interacts with [2Fe-2S] cluster. Glu491 is a Mg(2+) binding site. Ser517 (proton acceptor) is an active-site residue.

This sequence belongs to the IlvD/Edd family. As to quaternary structure, homodimer. Requires [2Fe-2S] cluster as cofactor. It depends on Mg(2+) as a cofactor.

It catalyses the reaction (2R)-2,3-dihydroxy-3-methylbutanoate = 3-methyl-2-oxobutanoate + H2O. The catalysed reaction is (2R,3R)-2,3-dihydroxy-3-methylpentanoate = (S)-3-methyl-2-oxopentanoate + H2O. It participates in amino-acid biosynthesis; L-isoleucine biosynthesis; L-isoleucine from 2-oxobutanoate: step 3/4. The protein operates within amino-acid biosynthesis; L-valine biosynthesis; L-valine from pyruvate: step 3/4. In terms of biological role, functions in the biosynthesis of branched-chain amino acids. Catalyzes the dehydration of (2R,3R)-2,3-dihydroxy-3-methylpentanoate (2,3-dihydroxy-3-methylvalerate) into 2-oxo-3-methylpentanoate (2-oxo-3-methylvalerate) and of (2R)-2,3-dihydroxy-3-methylbutanoate (2,3-dihydroxyisovalerate) into 2-oxo-3-methylbutanoate (2-oxoisovalerate), the penultimate precursor to L-isoleucine and L-valine, respectively. The chain is Dihydroxy-acid dehydratase from Yersinia pseudotuberculosis serotype O:1b (strain IP 31758).